The following is a 386-amino-acid chain: Prostacyclin receptor (386 aa).

At 1-16 (MADSCRNLTYVRGSVG) the chain is on the extracellular side. Intrachain disulfides connect cysteine 5–cysteine 165 and cysteine 92–cysteine 170. Asparagine 7 is a glycosylation site (N-linked (GlcNAc...) asparagine). The helical transmembrane segment at 17–38 (PATSTLMFVAGVVGNGLALGIL) threads the bilayer. Over 39–51 (SARRPARPSAFAV) the chain is Cytoplasmic. A helical membrane pass occupies residues 52–76 (LVTGLAATDLLGTSFLSPAVFVAYA). The Extracellular segment spans residues 77 to 94 (RNSSLLGLARGGPALCDA). A helical transmembrane segment spans residues 95–115 (FAFAMTFFGLASMLILFAMAV). The Cytoplasmic portion of the chain corresponds to 116 to 134 (ERCLALSHPYLYAQLDGPR). A helical membrane pass occupies residues 135–158 (CARLALPAIYAFCVLFCALPLLGL). Topologically, residues 159–181 (GQHQQYCPGSWCFLRMRWAQPGG) are extracellular. The chain crosses the membrane as a helical span at residues 182–208 (AAFSLAYAGLVALLVAAIFLCNGSVTL). Topologically, residues 209–235 (SLCRMYRQQKRHQGSLGPRPRTGEDEV) are cytoplasmic. A helical transmembrane segment spans residues 236–260 (DHLILLALMTVVMAVCSLPLTIRCF). The Extracellular segment spans residues 261-274 (TQAVAPDSSSEMGD). A helical transmembrane segment spans residues 275-295 (LLAFRFYAFNPILDPWVFILF). Over 296–386 (RKAVFQRLKL…AEASVACSLC (91 aa)) the chain is Cytoplasmic. A disordered region spans residues 322 to 376 (PLSQLASGRRDPRAPSAPVGKEGSCVPLSAWGEGQVEPLPPTQQSSGSAVGTSSK). Positions 363 to 376 (TQQSSGSAVGTSSK) are enriched in polar residues. Cysteine 383 is subject to Cysteine methyl ester. Cysteine 383 carries the S-farnesyl cysteine lipid modification. The propeptide at 384 to 386 (SLC) is removed in mature form.

The protein belongs to the G-protein coupled receptor 1 family. Interacts (non-isoprenylated C-terminus) with PDZK1. In terms of processing, isoprenylation does not influence ligand binding but is required for efficient coupling to the effectors adenylyl cyclase and phospholipase C.

It is found in the cell membrane. Functionally, receptor for prostacyclin (prostaglandin I2 or PGI2). The activity of this receptor is mediated by G(s) proteins which activate adenylate cyclase. The polypeptide is Prostacyclin receptor (PTGIR) (Homo sapiens (Human)).